The following is a 130-amino-acid chain: Large ribosomal subunit protein bL12 (130 aa).

The protein belongs to the bacterial ribosomal protein bL12 family. In terms of assembly, homodimer. Part of the ribosomal stalk of the 50S ribosomal subunit. Forms a multimeric L10(L12)X complex, where L10 forms an elongated spine to which 2 to 4 L12 dimers bind in a sequential fashion. Binds GTP-bound translation factors.

In terms of biological role, forms part of the ribosomal stalk which helps the ribosome interact with GTP-bound translation factors. Is thus essential for accurate translation. This is Large ribosomal subunit protein bL12 from Mycolicibacterium vanbaalenii (strain DSM 7251 / JCM 13017 / BCRC 16820 / KCTC 9966 / NRRL B-24157 / PYR-1) (Mycobacterium vanbaalenii).